Consider the following 24-residue polypeptide: Humanin-like 12 (24 aa).

Belongs to the humanin family.

It is found in the secreted. The protein localises to the cytoplasm. Functionally, plays a role as a neuroprotective and antiapoptotic factor. In Homo sapiens (Human), this protein is Humanin-like 12.